The chain runs to 266 residues: Segregation and condensation protein A (266 aa).

Belongs to the ScpA family. As to quaternary structure, component of a cohesin-like complex composed of ScpA, ScpB and the Smc homodimer, in which ScpA and ScpB bind to the head domain of Smc. The presence of the three proteins is required for the association of the complex with DNA.

It localises to the cytoplasm. Its function is as follows. Participates in chromosomal partition during cell division. May act via the formation of a condensin-like complex containing Smc and ScpB that pull DNA away from mid-cell into both cell halves. This chain is Segregation and condensation protein A, found in Coxiella burnetii (strain RSA 493 / Nine Mile phase I).